An 82-amino-acid polypeptide reads, in one-letter code: Small ribosomal subunit protein uS17 (82 aa).

This sequence belongs to the universal ribosomal protein uS17 family. In terms of assembly, part of the 30S ribosomal subunit.

Its function is as follows. One of the primary rRNA binding proteins, it binds specifically to the 5'-end of 16S ribosomal RNA. This is Small ribosomal subunit protein uS17 from Shewanella amazonensis (strain ATCC BAA-1098 / SB2B).